We begin with the raw amino-acid sequence, 497 residues long: Probable cytosol aminopeptidase (497 aa).

Lysine 267 and aspartate 272 together coordinate Mn(2+). Residue lysine 279 is part of the active site. Residues aspartate 290, aspartate 349, and glutamate 351 each coordinate Mn(2+). Residue arginine 353 is part of the active site.

Belongs to the peptidase M17 family. Requires Mn(2+) as cofactor.

The protein resides in the cytoplasm. It catalyses the reaction Release of an N-terminal amino acid, Xaa-|-Yaa-, in which Xaa is preferably Leu, but may be other amino acids including Pro although not Arg or Lys, and Yaa may be Pro. Amino acid amides and methyl esters are also readily hydrolyzed, but rates on arylamides are exceedingly low.. The catalysed reaction is Release of an N-terminal amino acid, preferentially leucine, but not glutamic or aspartic acids.. Presumably involved in the processing and regular turnover of intracellular proteins. Catalyzes the removal of unsubstituted N-terminal amino acids from various peptides. The protein is Probable cytosol aminopeptidase of Pseudomonas putida (strain ATCC 47054 / DSM 6125 / CFBP 8728 / NCIMB 11950 / KT2440).